We begin with the raw amino-acid sequence, 472 residues long: ATP synthase subunit beta (472 aa).

150-157 (GGAGVGKT) contributes to the ATP binding site.

Belongs to the ATPase alpha/beta chains family. As to quaternary structure, F-type ATPases have 2 components, CF(1) - the catalytic core - and CF(0) - the membrane proton channel. CF(1) has five subunits: alpha(3), beta(3), gamma(1), delta(1), epsilon(1). CF(0) has four main subunits: a, b, b' and c.

It is found in the cellular chromatophore membrane. The enzyme catalyses ATP + H2O + 4 H(+)(in) = ADP + phosphate + 5 H(+)(out). Functionally, produces ATP from ADP in the presence of a proton gradient across the membrane. The catalytic sites are hosted primarily by the beta subunits. The sequence is that of ATP synthase subunit beta from Rhodobacter capsulatus (Rhodopseudomonas capsulata).